Here is a 353-residue protein sequence, read N- to C-terminus: Rhodopsin (353 aa).

The Extracellular segment spans residues 1–36; it reads MNGTEGPFFYVPMLNTTGIVRSPYDYPQYYLVNPAA. 2 N-linked (GlcNAc...) asparagine glycosylation sites follow: asparagine 2 and asparagine 15. A helical membrane pass occupies residues 37–61; the sequence is YAALGAYMFLLILLGFPINFLTLYV. Residues 62–73 are Cytoplasmic-facing; the sequence is TIEHKKLRTPLN. A helical transmembrane segment spans residues 74-96; that stretch reads YILLNLAVANLFMVFGGFTTTMY. The Extracellular portion of the chain corresponds to 97-110; the sequence is TSMHGYFVLGRLGC. A disulfide bridge links cysteine 110 with cysteine 187. Residues 111–133 traverse the membrane as a helical segment; the sequence is NLEGFFATLGGEIGLWSLVVLAI. Residues 134-136 carry the 'Ionic lock' involved in activated form stabilization motif; it reads ERW. The Cytoplasmic segment spans residues 134–152; the sequence is ERWMVVCKPISNFRFGENH. A helical membrane pass occupies residues 153–173; it reads AIMGLAFTWIMACACAVPPLV. Residues 174–202 lie on the Extracellular side of the membrane; sequence GWSRYIPEGMQCSCGVDYYTRAEGFNNES. Asparagine 200 carries N-linked (GlcNAc...) asparagine glycosylation. A helical transmembrane segment spans residues 203 to 224; the sequence is FVVYMFICHFLIPMAVVFFCYG. Topologically, residues 225 to 252 are cytoplasmic; sequence RLLCAVKEAAAAQQESETTQRAEREVTR. Residues 253 to 274 form a helical membrane-spanning segment; that stretch reads MVVIMVVAFLICWLPYAGVAWW. The Extracellular portion of the chain corresponds to 275 to 286; sequence IFTHQGSEFGPV. The chain crosses the membrane as a helical span at residues 287 to 308; that stretch reads FMTIPAFFAKSSSIYNPLIYIC. Position 296 is an N6-(retinylidene)lysine (lysine 296). At 309 to 353 the chain is on the cytoplasmic side; that stretch reads MNKQFRHCMITTLCCGKNPFEEEEGASTTSKTEASSVSSSSVSPA. 2 S-palmitoyl cysteine lipidation sites follow: cysteine 322 and cysteine 323. Positions 330–353 are disordered; the sequence is EEEGASTTSKTEASSVSSSSVSPA. The segment covering 334–353 has biased composition (low complexity); the sequence is ASTTSKTEASSVSSSSVSPA.

The protein belongs to the G-protein coupled receptor 1 family. Opsin subfamily. Post-translationally, phosphorylated on some or all of the serine and threonine residues present in the C-terminal region. In terms of processing, contains one covalently linked retinal chromophore.

Its subcellular location is the membrane. The protein resides in the cell projection. It localises to the cilium. It is found in the photoreceptor outer segment. Photoreceptor required for image-forming vision at low light intensity. While most salt water fish species use retinal as chromophore, most freshwater fish use 3-dehydroretinal, or a mixture of retinal and 3-dehydroretinal. Light-induced isomerization of 11-cis to all-trans retinal triggers a conformational change that activates signaling via G-proteins. Subsequent receptor phosphorylation mediates displacement of the bound G-protein alpha subunit by arrestin and terminates signaling. The protein is Rhodopsin (rho) of Tetraodon nigroviridis (Spotted green pufferfish).